A 400-amino-acid polypeptide reads, in one-letter code: Putative C-type lectin domain family 20 member A (400 aa).

Residues 1–20 (MLPRALLLSFCAAALQLVSS) form the signal peptide. 2 consecutive C-type lectin domains span residues 26-131 (LVKE…FLCY) and 159-275 (ISGQ…FFCF). Intrachain disulfides connect C40–C130, C105–C122, C180–C274, and C248–C266. Residues 287–346 (ELPPLFHTSPTEMTEETTPRPGRAVASVGSGTDRRDTAAATEAQHLSSESKEKTSAQKSG) are disordered.

This chain is Putative C-type lectin domain family 20 member A, found in Homo sapiens (Human).